The sequence spans 369 residues: Transposase for insertion sequence element IS1201 (369 aa).

Belongs to the transposase mutator family.

Required for the transposition of the insertion element. The chain is Transposase for insertion sequence element IS1201 from Lactobacillus helveticus (Lactobacillus suntoryeus).